The sequence spans 237 residues: Protein YIPF4 (237 aa).

Topologically, residues 1–106 (MQFSPTNGDF…FNRQVVRDNP (106 aa)) are cytoplasmic. Residues 107 to 127 (DFWGPLAVVLLFSMISIYGQF) traverse the membrane as a helical segment. Topologically, residues 128 to 131 (RVVS) are lumenal. The helical transmembrane segment at 132–152 (WIITIWIFGSLTIFLLARVLG) threads the bilayer. The Cytoplasmic segment spans residues 153 to 160 (GEVSYGQV). The chain crosses the membrane as a helical span at residues 161-181 (LGVIGYSLLPLIVIAPLLLVI). At 182–188 (GGFEVVS) the chain is on the lumenal side. A helical membrane pass occupies residues 189–209 (TLIKLFGVFWAAYSAASLLVG). The Cytoplasmic segment spans residues 210 to 216 (DEFKTKK). The chain crosses the membrane as a helical span at residues 217 to 237 (PLLIYPIFLLYIYFLSLYTGV).

It belongs to the YIP1 family.

It localises to the golgi apparatus. It is found in the cis-Golgi network membrane. In terms of biological role, involved in the maintenance of the Golgi structure. The chain is Protein YIPF4 (yipf4) from Danio rerio (Zebrafish).